Reading from the N-terminus, the 255-residue chain is Small ribosomal subunit protein eS1B (255 aa).

Ala-2 is modified (N-acetylalanine; partial). Ser-245 is modified (phosphoserine). Lys-248 is covalently cross-linked (Glycyl lysine isopeptide (Lys-Gly) (interchain with G-Cter in ubiquitin)). A Phosphothreonine modification is found at Thr-254.

It belongs to the eukaryotic ribosomal protein eS1 family. As to quaternary structure, component of the small ribosomal subunit. Mature ribosomes consist of a small (40S) and a large (60S) subunit. The 40S subunit contains about 33 different proteins and 1 molecule of RNA (18S). The 60S subunit contains about 49 different proteins and 3 molecules of RNA (25S, 5.8S and 5S).

Its subcellular location is the cytoplasm. In Saccharomyces cerevisiae (strain RM11-1a) (Baker's yeast), this protein is Small ribosomal subunit protein eS1B.